The primary structure comprises 202 residues: Holliday junction branch migration complex subunit RuvA (202 aa).

Positions 1-64 are domain I; it reads MIGRLSGTLL…EDAHLLFGFA (64 aa). Positions 65–143 are domain II; sequence GRAERELFRQ…SLPSADLLSP (79 aa). Residues 144 to 152 are flexible linker; sequence APAAGAALL. The interval 153–202 is domain III; it reads VENDERADISQALQALGYSAREAEAALKSVPDGTDVATGIRLALKALARP.

It belongs to the RuvA family. In terms of assembly, homotetramer. Forms an RuvA(8)-RuvB(12)-Holliday junction (HJ) complex. HJ DNA is sandwiched between 2 RuvA tetramers; dsDNA enters through RuvA and exits via RuvB. An RuvB hexamer assembles on each DNA strand where it exits the tetramer. Each RuvB hexamer is contacted by two RuvA subunits (via domain III) on 2 adjacent RuvB subunits; this complex drives branch migration. In the full resolvosome a probable DNA-RuvA(4)-RuvB(12)-RuvC(2) complex forms which resolves the HJ.

The protein resides in the cytoplasm. Functionally, the RuvA-RuvB-RuvC complex processes Holliday junction (HJ) DNA during genetic recombination and DNA repair, while the RuvA-RuvB complex plays an important role in the rescue of blocked DNA replication forks via replication fork reversal (RFR). RuvA specifically binds to HJ cruciform DNA, conferring on it an open structure. The RuvB hexamer acts as an ATP-dependent pump, pulling dsDNA into and through the RuvAB complex. HJ branch migration allows RuvC to scan DNA until it finds its consensus sequence, where it cleaves and resolves the cruciform DNA. The protein is Holliday junction branch migration complex subunit RuvA of Laribacter hongkongensis (strain HLHK9).